The sequence spans 365 residues: Holliday junction branch migration complex subunit RuvB (365 aa).

The large ATPase domain (RuvB-L) stretch occupies residues Met1 to Tyr191. Residues Leu30, Arg31, Gly72, Lys75, Thr76, Ser77, Glu138 to Phe140, Arg181, Tyr191, and Arg228 each bind ATP. A Mg(2+)-binding site is contributed by Thr76. A small ATPAse domain (RuvB-S) region spans residues Glu192 to Asp262. Positions Gln265–Pro365 are head domain (RuvB-H). Arg320 and Arg325 together coordinate DNA.

It belongs to the RuvB family. Homohexamer. Forms an RuvA(8)-RuvB(12)-Holliday junction (HJ) complex. HJ DNA is sandwiched between 2 RuvA tetramers; dsDNA enters through RuvA and exits via RuvB. An RuvB hexamer assembles on each DNA strand where it exits the tetramer. Each RuvB hexamer is contacted by two RuvA subunits (via domain III) on 2 adjacent RuvB subunits; this complex drives branch migration. In the full resolvosome a probable DNA-RuvA(4)-RuvB(12)-RuvC(2) complex forms which resolves the HJ.

It localises to the cytoplasm. It catalyses the reaction ATP + H2O = ADP + phosphate + H(+). Its function is as follows. The RuvA-RuvB-RuvC complex processes Holliday junction (HJ) DNA during genetic recombination and DNA repair, while the RuvA-RuvB complex plays an important role in the rescue of blocked DNA replication forks via replication fork reversal (RFR). RuvA specifically binds to HJ cruciform DNA, conferring on it an open structure. The RuvB hexamer acts as an ATP-dependent pump, pulling dsDNA into and through the RuvAB complex. RuvB forms 2 homohexamers on either side of HJ DNA bound by 1 or 2 RuvA tetramers; 4 subunits per hexamer contact DNA at a time. Coordinated motions by a converter formed by DNA-disengaged RuvB subunits stimulates ATP hydrolysis and nucleotide exchange. Immobilization of the converter enables RuvB to convert the ATP-contained energy into a lever motion, pulling 2 nucleotides of DNA out of the RuvA tetramer per ATP hydrolyzed, thus driving DNA branch migration. The RuvB motors rotate together with the DNA substrate, which together with the progressing nucleotide cycle form the mechanistic basis for DNA recombination by continuous HJ branch migration. Branch migration allows RuvC to scan DNA until it finds its consensus sequence, where it cleaves and resolves cruciform DNA. In Rhodococcus opacus (strain B4), this protein is Holliday junction branch migration complex subunit RuvB.